The sequence spans 107 residues: U1-lycotoxin-Ls1o (107 aa).

The N-terminal stretch at 1–20 (MMKVLVVVALLVTLISYSSS) is a signal peptide. Residues 21–41 (EGIDDLEADELLSLMANEQTR) constitute a propeptide that is removed on maturation. Cystine bridges form between Cys-44-Cys-59, Cys-51-Cys-68, Cys-58-Cys-86, and Cys-70-Cys-84.

This sequence belongs to the neurotoxin 19 (CSTX) family. 04 (U1-Lctx) subfamily. As to expression, expressed by the venom gland.

It is found in the secreted. In Lycosa singoriensis (Wolf spider), this protein is U1-lycotoxin-Ls1o.